The sequence spans 348 residues: D-alanine--D-alanine ligase (348 aa).

Residues 136-344 enclose the ATP-grasp domain; sequence KSVFKSYNLP…LEKLVASLIE (209 aa). 171 to 226 is a binding site for ATP; the sequence is NKIINYPCFIKPANLGSSVGITKAYSKEEFITGIEFAAKYDERIIVEKSIEGRELE. Mg(2+) contacts are provided by Asp297, Glu311, and Asn313.

Belongs to the D-alanine--D-alanine ligase family. The cofactor is Mg(2+). Mn(2+) is required as a cofactor.

The protein resides in the cytoplasm. The catalysed reaction is 2 D-alanine + ATP = D-alanyl-D-alanine + ADP + phosphate + H(+). Its pathway is cell wall biogenesis; peptidoglycan biosynthesis. In terms of biological role, cell wall formation. The chain is D-alanine--D-alanine ligase from Prochlorococcus marinus (strain NATL1A).